A 757-amino-acid chain; its full sequence is Dolichyl-diphosphooligosaccharide--protein glycosyltransferase subunit stt-3 (757 aa).

Topologically, residues 1 to 13 (MTSTTAARTASSR) are cytoplasmic. Residues 14–34 (VGATTLLTIVVLALAWFVGFA) traverse the membrane as a helical segment. At 35–121 (SRLFAIVRFE…VHIREVCVFL (87 aa)) the chain is on the lumenal side. Residues 49–51 (EFD) carry the DXD motif 1 motif. Residue D51 coordinates Mn(2+). The helical transmembrane segment at 122 to 140 (APTFSGLTAIATYLLTKEL) threads the bilayer. Residues 141 to 142 (WS) are Cytoplasmic-facing. A helical transmembrane segment spans residues 143–160 (PGAGLFAACFIAISPGYT). Residues 161-171 (SRSVAGSYDNE) are Lumenal-facing. Residues D169 and E171 each contribute to the Mn(2+) site. The DXD motif 2 motif lies at 169 to 171 (DNE). Residues 172-191 (GIAIFALQFTYYLWVKSLKT) traverse the membrane as a helical segment. Topologically, residues 192 to 193 (GS) are cytoplasmic. The helical transmembrane segment at 194–208 (IMWASLCALSYFYMV) threads the bilayer. The Lumenal portion of the chain corresponds to 209-210 (SA). Helical transmembrane passes span 211 to 235 (WGGY…GRYS) and 236 to 261 (SRLF…FVGF). Over 262–269 (QPVRTSEH) the chain is Lumenal. A helical membrane pass occupies residues 270–289 (MPAFGVFGLLQIVALMHYAR). The Cytoplasmic portion of the chain corresponds to 290–299 (NRITRQQFMT). Residues 300 to 320 (LFVGGLTILGALSVVVYFALV) form a helical membrane-spanning segment. Over 321 to 358 (WGGYVAPFSGRFYSLWDTGYAKIHIPIIASVSEHQPTT) the chain is Lumenal. An SVSE motif motif is present at residues 350-353 (SVSE). The helical transmembrane segment at 359–381 (WVSFFFDLHITAAVFPVGLWYCI) threads the bilayer. The Cytoplasmic segment spans residues 382 to 387 (KKVNDE). The helical transmembrane segment at 388–404 (RVFIILYAVSAVYFAGV) threads the bilayer. Topologically, residues 405–408 (MVRL) are lumenal. R407 lines the dolichyl diphosphooligosaccharide pocket. A helical transmembrane segment spans residues 409–430 (MLTLTPAVCVLAGIGFSYTFEK). At 431–469 (YLKDEETKERSSSQSGTTKDEKLYDKAAKNVKSRNANDG) the chain is on the cytoplasmic side. A helical membrane pass occupies residues 470 to 495 (DESGVSSNVRTIISIILVIFLLMFVV). Topologically, residues 496–757 (HATYVTSNAY…IRPAPTASKA (262 aa)) are lumenal. The interval 547 to 549 (WWD) is interacts with target acceptor peptide in protein substrate. The short motif at 547–551 (WWDYG) is the WWDYG motif element. Y552 serves as a coordination point for dolichyl diphosphooligosaccharide. N559 and N566 each carry an N-linked (GlcNAc...) asparagine glycan. N570 carries N-linked (GlcNAc...) (high mannose) asparagine glycosylation. A glycan (N-linked (GlcNAc...) asparagine) is linked at N584. A DK motif motif is present at residues 614–621 (DINKFLWM). Residues 721 to 757 (RPTVKSEEATIPIKGKKATQGKNKKGVIRPAPTASKA) are disordered. The span at 734–747 (KGKKATQGKNKKGV) shows a compositional bias: basic residues.

The protein belongs to the STT3 family. In terms of assembly, component of the oligosaccharyltransferase (OST) complex. Mg(2+) is required as a cofactor. The cofactor is Mn(2+).

Its subcellular location is the endoplasmic reticulum membrane. The catalysed reaction is a di-trans,poly-cis-dolichyl diphosphooligosaccharide + L-asparaginyl-[protein] = N(4)-(oligosaccharide-(1-&gt;4)-N-acetyl-beta-D-glucosaminyl-(1-&gt;4)-N-acetyl-beta-D-glucosaminyl)-L-asparaginyl-[protein] + a di-trans,poly-cis-dolichyl diphosphate + H(+). The protein operates within protein modification; protein glycosylation. Its function is as follows. Catalytic subunit of the oligosaccharyl transferase (OST) complex that catalyzes the initial transfer of a defined glycan (Glc(3)Man(9)GlcNAc(2) in eukaryotes) from the lipid carrier dolichol-pyrophosphate to an asparagine residue within an Asn-X-Ser/Thr consensus motif in nascent polypeptide chains, the first step in protein N-glycosylation. N-glycosylation occurs cotranslationally and the complex associates with the Sec61 complex at the channel-forming translocon complex that mediates protein translocation across the endoplasmic reticulum (ER). All subunits are required for a maximal enzyme activity. This subunit contains the active site and the acceptor peptide and donor lipid-linked oligosaccharide (LLO) binding pockets. In Caenorhabditis elegans, this protein is Dolichyl-diphosphooligosaccharide--protein glycosyltransferase subunit stt-3.